Here is a 255-residue protein sequence, read N- to C-terminus: Imidazole glycerol phosphate synthase subunit HisF (255 aa).

Active-site residues include Asp12 and Asp131.

This sequence belongs to the HisA/HisF family. Heterodimer of HisH and HisF.

It localises to the cytoplasm. The enzyme catalyses 5-[(5-phospho-1-deoxy-D-ribulos-1-ylimino)methylamino]-1-(5-phospho-beta-D-ribosyl)imidazole-4-carboxamide + L-glutamine = D-erythro-1-(imidazol-4-yl)glycerol 3-phosphate + 5-amino-1-(5-phospho-beta-D-ribosyl)imidazole-4-carboxamide + L-glutamate + H(+). Its pathway is amino-acid biosynthesis; L-histidine biosynthesis; L-histidine from 5-phospho-alpha-D-ribose 1-diphosphate: step 5/9. Functionally, IGPS catalyzes the conversion of PRFAR and glutamine to IGP, AICAR and glutamate. The HisF subunit catalyzes the cyclization activity that produces IGP and AICAR from PRFAR using the ammonia provided by the HisH subunit. In Neisseria meningitidis serogroup C / serotype 2a (strain ATCC 700532 / DSM 15464 / FAM18), this protein is Imidazole glycerol phosphate synthase subunit HisF.